We begin with the raw amino-acid sequence, 205 residues long: Ribonuclease HII (205 aa).

Residues 14-205 form the RNase H type-2 domain; it reads SLISGIDEAG…SFRLKQLGEK (192 aa). The a divalent metal cation site is built by D20, E21, and D117.

Belongs to the RNase HII family. Requires Mn(2+) as cofactor. It depends on Mg(2+) as a cofactor.

The protein resides in the cytoplasm. The catalysed reaction is Endonucleolytic cleavage to 5'-phosphomonoester.. Endonuclease that specifically degrades the RNA of RNA-DNA hybrids. The polypeptide is Ribonuclease HII (Chlorobium phaeobacteroides (strain DSM 266 / SMG 266 / 2430)).